We begin with the raw amino-acid sequence, 99 residues long: Protein S100-Z (99 aa).

2 EF-hand domains span residues 13–48 (ITVF…FLMS) and 50–85 (KDPM…LTVA). Residues S20, E23, D25, K28, E33, D63, N65, D67, E69, and E74 each coordinate Ca(2+).

Belongs to the S-100 family. As to quaternary structure, homodimer. Homodimers may assemble into larger stable oligomers. In larva at 5 days post-fertilization, shows very restricted expression only in a few large cells of the olfactory placode. More widely expressed in the adult. Expressed at higher levels in gut than in spleen, head kidney and gill.

In Danio rerio (Zebrafish), this protein is Protein S100-Z.